We begin with the raw amino-acid sequence, 483 residues long: Glutamyl-tRNA(Gln) amidotransferase subunit A (483 aa).

Residues Lys76 and Ser151 each act as charge relay system in the active site. Ser175 (acyl-ester intermediate) is an active-site residue.

This sequence belongs to the amidase family. GatA subfamily. In terms of assembly, heterotrimer of A, B and C subunits.

It carries out the reaction L-glutamyl-tRNA(Gln) + L-glutamine + ATP + H2O = L-glutaminyl-tRNA(Gln) + L-glutamate + ADP + phosphate + H(+). Its function is as follows. Allows the formation of correctly charged Gln-tRNA(Gln) through the transamidation of misacylated Glu-tRNA(Gln) in organisms which lack glutaminyl-tRNA synthetase. The reaction takes place in the presence of glutamine and ATP through an activated gamma-phospho-Glu-tRNA(Gln). The chain is Glutamyl-tRNA(Gln) amidotransferase subunit A from Pseudomonas fluorescens (strain Pf0-1).